The primary structure comprises 160 residues: Anaerobic nitrite reductase AHB1 (160 aa).

Residues 8-157 (VFTEEQEALV…LVAAIKAEMN (150 aa)) enclose the Globin domain. A Homodimerization motif is present at residues 41–45 (EIAPT). 6 residues coordinate heme b: Ser-51, Lys-65, His-69, Arg-99, Ser-103, and His-104. A Homodimerization motif is present at residues 111-123 (DEHFEVAKYALLE).

The protein belongs to the plant globin family. As to quaternary structure, homodimer. It depends on heme b as a cofactor. In terms of tissue distribution, expressed in roots and rosette leaves.

Its subcellular location is the cytoplasm. The protein localises to the nucleus. It carries out the reaction Fe(III)-heme b-[protein] + nitric oxide + H2O = Fe(II)-heme b-[protein] + nitrite + 2 H(+). Phytoglobin that reduces nitrite to nitric oxide (NO) under anoxic conditions (e.g. during flooding or in waterlogged soil). May not function as an oxygen storage or transport protein. Has an unusually high affinity for O(2) through an hexacoordinate heme iron because of a very low dissociation constant. The sequence is that of Anaerobic nitrite reductase AHB1 from Arabidopsis thaliana (Mouse-ear cress).